The chain runs to 449 residues: Trigger factor (449 aa).

The PPIase FKBP-type domain occupies 169 to 254 (GDRITVDFVG…AKQVEAPGEL (86 aa)).

The protein belongs to the FKBP-type PPIase family. Tig subfamily.

It is found in the cytoplasm. The enzyme catalyses [protein]-peptidylproline (omega=180) = [protein]-peptidylproline (omega=0). Functionally, involved in protein export. Acts as a chaperone by maintaining the newly synthesized protein in an open conformation. Functions as a peptidyl-prolyl cis-trans isomerase. The polypeptide is Trigger factor (Azorhizobium caulinodans (strain ATCC 43989 / DSM 5975 / JCM 20966 / LMG 6465 / NBRC 14845 / NCIMB 13405 / ORS 571)).